The following is a 359-amino-acid chain: NADH-quinone oxidoreductase subunit H (359 aa).

Helical transmembrane passes span Ile16–Ala36, Gly94–Ile114, Gly128–Trp148, Val167–Leu187, Gly205–Ile225, Phe261–Leu281, Ile296–Val316, and Leu331–Met351.

This sequence belongs to the complex I subunit 1 family. NDH-1 is composed of 14 different subunits. Subunits NuoA, H, J, K, L, M, N constitute the membrane sector of the complex.

The protein localises to the cell inner membrane. The enzyme catalyses a quinone + NADH + 5 H(+)(in) = a quinol + NAD(+) + 4 H(+)(out). In terms of biological role, NDH-1 shuttles electrons from NADH, via FMN and iron-sulfur (Fe-S) centers, to quinones in the respiratory chain. The immediate electron acceptor for the enzyme in this species is believed to be ubiquinone. Couples the redox reaction to proton translocation (for every two electrons transferred, four hydrogen ions are translocated across the cytoplasmic membrane), and thus conserves the redox energy in a proton gradient. This subunit may bind ubiquinone. This chain is NADH-quinone oxidoreductase subunit H, found in Polaromonas naphthalenivorans (strain CJ2).